Reading from the N-terminus, the 391-residue chain is S-adenosylmethionine synthase (391 aa).

The tract at residues 1–20 is disordered; the sequence is MPRSDYLFTSESVSEGHPDK. His-17 is an ATP binding site. Asp-19 is a Mg(2+) binding site. Residue Glu-45 coordinates K(+). L-methionine contacts are provided by Glu-58 and Gln-102. A flexible loop region spans residues 102–112; that stretch reads QSADIAQGVDA. Residues 169 to 171, 235 to 236, Asp-244, 250 to 251, Ala-267, and Lys-271 contribute to the ATP site; these read DAK, KF, and RK. Asp-244 serves as a coordination point for L-methionine. Lys-275 contributes to the L-methionine binding site.

This sequence belongs to the AdoMet synthase family. Homotetramer; dimer of dimers. It depends on Mg(2+) as a cofactor. Requires K(+) as cofactor.

It localises to the cytoplasm. The enzyme catalyses L-methionine + ATP + H2O = S-adenosyl-L-methionine + phosphate + diphosphate. Its pathway is amino-acid biosynthesis; S-adenosyl-L-methionine biosynthesis; S-adenosyl-L-methionine from L-methionine: step 1/1. Functionally, catalyzes the formation of S-adenosylmethionine (AdoMet) from methionine and ATP. The overall synthetic reaction is composed of two sequential steps, AdoMet formation and the subsequent tripolyphosphate hydrolysis which occurs prior to release of AdoMet from the enzyme. The protein is S-adenosylmethionine synthase of Methylorubrum populi (strain ATCC BAA-705 / NCIMB 13946 / BJ001) (Methylobacterium populi).